Consider the following 120-residue polypeptide: Large ribosomal subunit protein bL20 (120 aa).

This sequence belongs to the bacterial ribosomal protein bL20 family.

Its function is as follows. Binds directly to 23S ribosomal RNA and is necessary for the in vitro assembly process of the 50S ribosomal subunit. It is not involved in the protein synthesizing functions of that subunit. The chain is Large ribosomal subunit protein bL20 from Karelsulcia muelleri (strain GWSS) (Sulcia muelleri).